The primary structure comprises 89 residues: Small ribosomal subunit protein uS15 (89 aa).

This sequence belongs to the universal ribosomal protein uS15 family. In terms of assembly, part of the 30S ribosomal subunit. Forms a bridge to the 50S subunit in the 70S ribosome, contacting the 23S rRNA.

One of the primary rRNA binding proteins, it binds directly to 16S rRNA where it helps nucleate assembly of the platform of the 30S subunit by binding and bridging several RNA helices of the 16S rRNA. Functionally, forms an intersubunit bridge (bridge B4) with the 23S rRNA of the 50S subunit in the ribosome. The polypeptide is Small ribosomal subunit protein uS15 (Nitrosomonas eutropha (strain DSM 101675 / C91 / Nm57)).